Here is a 308-residue protein sequence, read N- to C-terminus: Very-long-chain enoyl-CoA reductase (308 aa).

The Cytoplasmic portion of the chain corresponds to 1–86 (MKHYEVEILD…YFRDLGAQIS (86 aa)). Lys22 carries the N6-acetyllysine modification. A Phosphoserine modification is found at Ser58. Lys60 is subject to N6-acetyllysine. A helical transmembrane segment spans residues 87–106 (WVTVFLTEYAGPLFIYLLFY). The Lumenal segment spans residues 107–124 (FRVPFIYGRKYDFTSSRH). Residues 125-147 (TVVHLACICHSFHYIKRLLETLF) traverse the membrane as a helical segment. At 148 to 158 (VHRFSHGTMPL) the chain is on the cytoplasmic side. A helical membrane pass occupies residues 159–180 (RNIFKNCTYYWGFAAWMAYYIN). The Lumenal portion of the chain corresponds to 181-189 (HPLYTPPTY). A helical transmembrane segment spans residues 190–216 (GAQQVKLALAIFVICQLGNFSIHMALR). Residues 217-245 (DLRPAGSKTRKIPYPTRNPFTWLFLLVSC) lie on the Cytoplasmic side of the membrane. A helical membrane pass occupies residues 246-262 (PNYTYEVGSWIGFAIMT). The Lumenal portion of the chain corresponds to 263-264 (QC). The helical transmembrane segment at 265 to 292 (LPVALFSLVGFTQMTIWAKGKHRSYLKE) threads the bilayer. At 293–308 (FRDYPPLRMPIIPFLL) the chain is on the cytoplasmic side.

This sequence belongs to the steroid 5-alpha reductase family. As to quaternary structure, interacts with ELOVL1 and LASS2. In terms of processing, glycosylated.

Its subcellular location is the endoplasmic reticulum membrane. The catalysed reaction is a very-long-chain 2,3-saturated fatty acyl-CoA + NADP(+) = a very-long-chain (2E)-enoyl-CoA + NADPH + H(+). It carries out the reaction octadecanoyl-CoA + NADP(+) = (2E)-octadecenoyl-CoA + NADPH + H(+). It catalyses the reaction (2E,7Z,10Z,13Z,16Z)-docosapentaenoyl-CoA + NADPH + H(+) = (7Z,10Z,13Z,16Z)-docosatetraenoyl-CoA + NADP(+). The enzyme catalyses (2E,7Z,10Z,13Z,16Z,19Z)-docosahexaenoyl-CoA + NADPH + H(+) = (7Z,10Z,13Z,16Z,19Z)-docosapentaenoyl-CoA + NADP(+). The catalysed reaction is (2E,8Z,11Z,14Z)-eicosatetraenoyl-CoA + NADPH + H(+) = (8Z,11Z,14Z)-eicosatrienoyl-CoA + NADP(+). It carries out the reaction (2E)-hexadecenoyl-CoA + NADPH + H(+) = hexadecanoyl-CoA + NADP(+). The protein operates within lipid metabolism; fatty acid biosynthesis. It functions in the pathway lipid metabolism; sphingolipid metabolism. Functionally, involved in both the production of very long-chain fatty acids for sphingolipid synthesis and the degradation of the sphingosine moiety in sphingolipids through the sphingosine 1-phosphate metabolic pathway. Catalyzes the last of the four reactions of the long-chain fatty acids elongation cycle. This endoplasmic reticulum-bound enzymatic process, allows the addition of 2 carbons to the chain of long- and very long-chain fatty acids/VLCFAs per cycle. This enzyme reduces the trans-2,3-enoyl-CoA fatty acid intermediate to an acyl-CoA that can be further elongated by entering a new cycle of elongation. Thereby, it participates in the production of VLCFAs of different chain lengths that are involved in multiple biological processes as precursors of membrane lipids and lipid mediators. Catalyzes the saturation step of the sphingosine 1-phosphate metabolic pathway, the conversion of trans-2-hexadecenoyl-CoA to palmitoyl-CoA. This Bos taurus (Bovine) protein is Very-long-chain enoyl-CoA reductase (TECR).